The chain runs to 977 residues: 2-oxoglutarate dehydrogenase E1 component (977 aa).

The 49-residue stretch at 77–125 (VLNNRHLAKPAYREEFKGDTERSTAAYIDIREDASTGSTSKLPLEAKFG) folds into the RPE1 insert domain.

Belongs to the alpha-ketoglutarate dehydrogenase family. As to quaternary structure, homodimer. Part of the 2-oxoglutarate dehydrogenase (OGDH) complex composed of E1 (2-oxoglutarate dehydrogenase), E2 (dihydrolipoamide succinyltransferase) and E3 (dihydrolipoamide dehydrogenase); the complex contains multiple copies of the three enzymatic components (E1, E2 and E3). Thiamine diphosphate serves as cofactor.

The enzyme catalyses N(6)-[(R)-lipoyl]-L-lysyl-[protein] + 2-oxoglutarate + H(+) = N(6)-[(R)-S(8)-succinyldihydrolipoyl]-L-lysyl-[protein] + CO2. E1 component of the 2-oxoglutarate dehydrogenase (OGDH) complex which catalyzes the decarboxylation of 2-oxoglutarate, the first step in the conversion of 2-oxoglutarate to succinyl-CoA and CO(2). This chain is 2-oxoglutarate dehydrogenase E1 component (sucA), found in Rickettsia felis (strain ATCC VR-1525 / URRWXCal2) (Rickettsia azadi).